A 258-amino-acid polypeptide reads, in one-letter code: MKKMPMRKRFGQHFLHDSFVLQKIVSAIHPQKTDTLVEIGPGRGALTDYLLTECDNLALVEIDGDLVAFLQKKYNQQKNITIYQNDALQFDFSSVKTDKPLRVVGNLPYNISTPLLFHLFSQIHCIEDMHFMLQKEVVRRITAEVGSHDYGRLSVMAQYFCDNTYLFTVSPQAFTPPPRVESAIIRLIPRHNFTPVAKNLDQLSHVVKEAFSYRRKTVGNALKKLINPSQWPLLEINPQLRPQELTVEDFVKISNILN.

Residues His-13, Leu-15, Gly-40, Glu-61, Asp-86, and Asn-106 each contribute to the S-adenosyl-L-methionine site.

It belongs to the class I-like SAM-binding methyltransferase superfamily. rRNA adenine N(6)-methyltransferase family. RsmA subfamily.

The protein resides in the cytoplasm. It carries out the reaction adenosine(1518)/adenosine(1519) in 16S rRNA + 4 S-adenosyl-L-methionine = N(6)-dimethyladenosine(1518)/N(6)-dimethyladenosine(1519) in 16S rRNA + 4 S-adenosyl-L-homocysteine + 4 H(+). Functionally, specifically dimethylates two adjacent adenosines (A1518 and A1519) in the loop of a conserved hairpin near the 3'-end of 16S rRNA in the 30S particle. May play a critical role in biogenesis of 30S subunits. The protein is Ribosomal RNA small subunit methyltransferase A of Coxiella burnetii (strain Dugway 5J108-111).